A 588-amino-acid chain; its full sequence is 2-succinyl-5-enolpyruvyl-6-hydroxy-3-cyclohexene-1-carboxylate synthase (588 aa).

This sequence belongs to the TPP enzyme family. MenD subfamily. As to quaternary structure, homodimer. Mg(2+) is required as a cofactor. Mn(2+) serves as cofactor. The cofactor is thiamine diphosphate.

The enzyme catalyses isochorismate + 2-oxoglutarate + H(+) = 5-enolpyruvoyl-6-hydroxy-2-succinyl-cyclohex-3-ene-1-carboxylate + CO2. Its pathway is quinol/quinone metabolism; 1,4-dihydroxy-2-naphthoate biosynthesis; 1,4-dihydroxy-2-naphthoate from chorismate: step 2/7. The protein operates within cofactor biosynthesis; phylloquinone biosynthesis. In terms of biological role, catalyzes the thiamine diphosphate-dependent decarboxylation of 2-oxoglutarate and the subsequent addition of the resulting succinic semialdehyde-thiamine pyrophosphate anion to isochorismate to yield 2-succinyl-5-enolpyruvyl-6-hydroxy-3-cyclohexene-1-carboxylate (SEPHCHC). In Prochlorococcus marinus (strain MIT 9515), this protein is 2-succinyl-5-enolpyruvyl-6-hydroxy-3-cyclohexene-1-carboxylate synthase.